We begin with the raw amino-acid sequence, 380 residues long: S-phase entry cyclin-6 (380 aa).

A disordered region spans residues 63 to 91 (PRGKLQRDSTHLEKTRKRQLSNDSTDPIE).

The protein belongs to the cyclin family. Cyclin AB subfamily.

Functionally, involved in G1/S and or S phase progression. Interacts with CDC28. This chain is S-phase entry cyclin-6 (CLB6), found in Saccharomyces cerevisiae (strain ATCC 204508 / S288c) (Baker's yeast).